A 170-amino-acid chain; its full sequence is Two-component response regulator ORR6 (170 aa).

One can recognise a Response regulatory domain in the interval 51–170 (HVLAVDDSSV…DVSRLCSRIR (120 aa)). Residue aspartate 103 is modified to 4-aspartylphosphate.

It belongs to the ARR family. Type-A subfamily. Two-component system major event consists of a His-to-Asp phosphorelay between a sensor histidine kinase (HK) and a response regulator (RR). In plants, the His-to-Asp phosphorelay involves an additional intermediate named Histidine-containing phosphotransfer protein (HPt). This multistep phosphorelay consists of a His-Asp-His-Asp sequential transfer of a phosphate group between first a His and an Asp of the HK protein, followed by the transfer to a conserved His of the HPt protein and finally the transfer to an Asp in the receiver domain of the RR protein. In terms of tissue distribution, expressed in roots, leaf blades, leaf sheaths, shoot apex, flowers and panicles.

Functionally, functions as a response regulator involved in His-to-Asp phosphorelay signal transduction system. Phosphorylation of the Asp residue in the receiver domain activates the ability of the protein to promote the transcription of target genes. Type-A response regulators seem to act as negative regulators of the cytokinin signaling. The protein is Two-component response regulator ORR6 of Oryza sativa subsp. japonica (Rice).